The primary structure comprises 236 residues: Dual specificity protein phosphatase 15 (236 aa).

A lipid anchor (N-myristoyl glycine) is attached at G2. Positions 4-144 (GMTKVLPGLY…LEEFGWANSQ (141 aa)) constitute a Tyrosine-protein phosphatase domain. C88 functions as the Phosphocysteine intermediate in the catalytic mechanism. Positions 178-213 (GPGTSAPSATTASSAASEGTLQRLVPRSPRESHRPL) are disordered. A compositionally biased stretch (low complexity) spans 181-194 (TSAPSATTASSAAS).

This sequence belongs to the protein-tyrosine phosphatase family. Non-receptor class dual specificity subfamily.

The protein localises to the cell membrane. The enzyme catalyses O-phospho-L-tyrosyl-[protein] + H2O = L-tyrosyl-[protein] + phosphate. It catalyses the reaction O-phospho-L-seryl-[protein] + H2O = L-seryl-[protein] + phosphate. It carries out the reaction O-phospho-L-threonyl-[protein] + H2O = L-threonyl-[protein] + phosphate. Its function is as follows. May play a role in the regulation of oligodendrocyte differentiation. May play a role in the regulation of myelin formation. Involved in the regulation of Erk1/2 phosphorylation in Schwann cells; the signaling may be linked to the regulation of myelination. May dephosphorylate MAPK13, ATF2, ERBB3, PDGFRB and SNX6. The sequence is that of Dual specificity protein phosphatase 15 (Dusp15) from Rattus norvegicus (Rat).